A 244-amino-acid polypeptide reads, in one-letter code: Carboxy-S-adenosyl-L-methionine synthase (244 aa).

S-adenosyl-L-methionine-binding positions include tyrosine 41, 66 to 68 (GCS), asparagine 134, and arginine 201.

It belongs to the class I-like SAM-binding methyltransferase superfamily. Cx-SAM synthase family. Homodimer.

The catalysed reaction is prephenate + S-adenosyl-L-methionine = carboxy-S-adenosyl-L-methionine + 3-phenylpyruvate + H2O. Functionally, catalyzes the conversion of S-adenosyl-L-methionine (SAM) to carboxy-S-adenosyl-L-methionine (Cx-SAM). In Cellvibrio japonicus (strain Ueda107) (Pseudomonas fluorescens subsp. cellulosa), this protein is Carboxy-S-adenosyl-L-methionine synthase.